Consider the following 272-residue polypeptide: 5'-AMP-activated protein kinase subunit beta-2 (272 aa).

The segment at 1-52 is disordered; that stretch reads MGNTTSDRVSGERHGAKAARSEGAGGHAPGKEHKIMVGSTDDPSVFSLPDSK. Serine 39 bears the Phosphoserine mark. Position 40 is a phosphothreonine (threonine 40). At serine 69 the chain carries Phosphoserine; by ULK1. A phosphoserine mark is found at serine 95 and serine 108. At threonine 148 the chain carries Phosphothreonine. Phosphoserine occurs at positions 158, 170, 174, and 184.

Belongs to the 5'-AMP-activated protein kinase beta subunit family. As to quaternary structure, AMPK is a heterotrimer of an alpha catalytic subunit (PRKAA1 or PRKAA2), a beta (PRKAB1 or PRKAB2) and a gamma non-catalytic subunits (PRKAG1, PRKAG2 or PRKAG3). Post-translationally, phosphorylated when associated with the catalytic subunit (PRKAA1 or PRKAA2). Phosphorylated by ULK1 and ULK2; leading to negatively regulate AMPK activity and suggesting the existence of a regulatory feedback loop between ULK1, ULK2 and AMPK.

Non-catalytic subunit of AMP-activated protein kinase (AMPK), an energy sensor protein kinase that plays a key role in regulating cellular energy metabolism. In response to reduction of intracellular ATP levels, AMPK activates energy-producing pathways and inhibits energy-consuming processes: inhibits protein, carbohydrate and lipid biosynthesis, as well as cell growth and proliferation. AMPK acts via direct phosphorylation of metabolic enzymes, and by longer-term effects via phosphorylation of transcription regulators. Also acts as a regulator of cellular polarity by remodeling the actin cytoskeleton; probably by indirectly activating myosin. Beta non-catalytic subunit acts as a scaffold on which the AMPK complex assembles, via its C-terminus that bridges alpha (PRKAA1 or PRKAA2) and gamma subunits (PRKAG1, PRKAG2 or PRKAG3). This chain is 5'-AMP-activated protein kinase subunit beta-2 (PRKAB2), found in Homo sapiens (Human).